The following is a 621-amino-acid chain: DDB1- and CUL4-associated factor 10 homolog (621 aa).

WD repeat units lie at residues 46 to 85 (GRTGAIFNLEFNADGNVVVAATERKCVLVFDAITQKEIFK), 89 to 127 (AHTDSVNCIKFFDERLFATGSDDFTVALWDLRNMKQKLR), 131 to 170 (GHSNWVKNIEYSSKDKLLVSSGFDGSIFTWDINSQTEQGL), and 176 to 215 (FHASGLMRCRISPTGDKLVLCTSGGYIMIIHHLDLTTLHK). Disordered stretches follow at residues 305 to 349 (VRSE…PRQA) and 437 to 483 (LMGS…TTVR). The residue at position 307 (S307) is a Phosphoserine. Over residues 324 to 342 (STTLASRSSLNESQDQDTV) the composition is skewed to polar residues. A compositionally biased stretch (low complexity) spans 454 to 478 (ESNQSSSSSSSSSSSSSSSSSSNNS). 2 positions are modified to phosphoserine: S494 and S497. The WD 5 repeat unit spans residues 588–621 (EHQDVVLCAKFSPREPLLVTGCNGGEVTWYRPNL).

This sequence belongs to the WD repeat DCAF10 family.

The polypeptide is DDB1- and CUL4-associated factor 10 homolog (Drosophila melanogaster (Fruit fly)).